We begin with the raw amino-acid sequence, 1065 residues long: MSSLDEGLKQMSQQEYRNEEQNQEGNQEDLNNQNDHNLNNNELDSLSSPPSDNYNEEEFEQEDDIKPDIKIYQNASQNNISQTQRISQTQLPQQQGGGGKRNSSLLQKEHYHQKNQEIIQKLMEKKKKEQEEKEKKELKLKKREDKLRKRMLEEAAKIREQKEVNLESQTEQSDHSNVTKSKKLKFKSVQDIYQLVVIQGKYQREQLTDKQQQELNEFESRLNEEKTTIIKMQQVYRSRQITFLEELKKKQEKKKQEEEQQKLKQEKIQTKLREQYENVNSNLYAETELFKQKKQEITKVSTQKQLVRASSAEGDKEKDDKKDIAKKIQQKNQEYIEKLKEKKRQEIAKEEEEKKKKEQLKEKMKDFVLVNIKKDIENGVFFVDVPEKKPKKEKKKNESKEDNIQITSPKLNSTKSLSSQITRKTNDAKKVEKLPKIKDSNKENHSKERNEDNEEGDDGEYECDEGDEGASDGEDEDDGNGSAIKRKLRKYPFITDLELWKKKQRLPADIKVFIVTGGYHDISKALKKRGWIANPDTKSPCYNFRWSLQTKDIDYENLKDFQIVNHFQKSACITTKVGLCKSLRNLVWHENVDIDTFYPRCFDLNDTEDFENFVEEFKSSKAESILKRYMRMYFEKDPDIEKIKKQAVIAFNVCERKMKELDEIIDDPNSIQLITKKEWNILSADELTEEKLAQKKYEQWLERIEGKNKQKPKKKKKKSKKDKQQGDTEKKEEEEGEAEDEEEDEEDEEEEEKQMDEFTLKVHQILKRYKVKYPQDCLTGEDNVWIIKPAGLSRGRGITCYNNLVEILDHVKSKESQWVIQKYIENPLIIKKRKFDIRVWILVTDWNPLTIWHYTDCYVRFSVDDYDTENLQNKFTHLTNNMVSKLKQRDEKDDITELGSMYFKENFINYLKEKEGYDVFTDKIEPQIVRAIIMSLKSVQDNIENRKNSIEMYGYDFMVDDLYNTWLIEINSSPSMEYSTPVTERLVKAVSEDIVKVVIDYGMEKSKKARKNIETGAFKRIYKGKYVEEKTNVVGLNLICEGVALKKGKKNSNVAKVNNLKPNFS.

Disordered stretches follow at residues 1 to 146, 158 to 182, 301 to 326, 341 to 360, 381 to 482, and 708 to 755; these read MSSL…REDK, IREQ…TKSK, STQK…DIAK, EKKR…KEQL, FFVD…GNGS, and NKQK…EKQM. Over residues 23–53 the composition is skewed to low complexity; the sequence is QEGNQEDLNNQNDHNLNNNELDSLSSPPSDN. Over residues 54–63 the composition is skewed to acidic residues; that stretch reads YNEEEFEQED. The span at 73 to 92 shows a compositional bias: polar residues; that stretch reads QNASQNNISQTQRISQTQLP. Over residues 122 to 146 the composition is skewed to basic and acidic residues; that stretch reads LMEKKKKEQEEKEKKELKLKKREDK. Residues 166-179 show a composition bias toward polar residues; it reads LESQTEQSDHSNVT. The segment covering 313 to 326 has biased composition (basic and acidic residues); it reads EGDKEKDDKKDIAK. Basic and acidic residues predominate over residues 385–403; the sequence is VPEKKPKKEKKKNESKEDN. A compositionally biased stretch (polar residues) spans 404–423; sequence IQITSPKLNSTKSLSSQITR. The segment covering 424–450 has biased composition (basic and acidic residues); that stretch reads KTNDAKKVEKLPKIKDSNKENHSKERN. The span at 451–479 shows a compositional bias: acidic residues; that stretch reads EDNEEGDDGEYECDEGDEGASDGEDEDDG. The TTL domain occupies 633–1009; that stretch reads YFEKDPDIEK…DYGMEKSKKA (377 aa). Residues 709 to 721 show a composition bias toward basic residues; sequence KQKPKKKKKKSKK. Basic and acidic residues predominate over residues 722-733; it reads DKQQGDTEKKEE. Residues 734–754 show a composition bias toward acidic residues; that stretch reads EEGEAEDEEEDEEDEEEEEKQ. ATP-binding positions include 821–824, K834, and D836; that span reads QKYI.

The protein localises to the cell projection. It localises to the cilium. The protein resides in the cytoplasm. Its subcellular location is the cytoskeleton. It is found in the cilium axoneme. Functionally, probable glycylase which modifies tubulin, generating side chains of glycine on the gamma-carboxyl groups of specific glutamate residues within the C-terminal tail of tubulin. This Tetrahymena thermophila (strain SB210) protein is Tubulin glycylase 3C (TTLL3C).